The following is a 486-amino-acid chain: Aspartyl/glutamyl-tRNA(Asn/Gln) amidotransferase subunit B (486 aa).

Belongs to the GatB/GatE family. GatB subfamily. Heterotrimer of A, B and C subunits.

The catalysed reaction is L-glutamyl-tRNA(Gln) + L-glutamine + ATP + H2O = L-glutaminyl-tRNA(Gln) + L-glutamate + ADP + phosphate + H(+). It carries out the reaction L-aspartyl-tRNA(Asn) + L-glutamine + ATP + H2O = L-asparaginyl-tRNA(Asn) + L-glutamate + ADP + phosphate + 2 H(+). In terms of biological role, allows the formation of correctly charged Asn-tRNA(Asn) or Gln-tRNA(Gln) through the transamidation of misacylated Asp-tRNA(Asn) or Glu-tRNA(Gln) in organisms which lack either or both of asparaginyl-tRNA or glutaminyl-tRNA synthetases. The reaction takes place in the presence of glutamine and ATP through an activated phospho-Asp-tRNA(Asn) or phospho-Glu-tRNA(Gln). The polypeptide is Aspartyl/glutamyl-tRNA(Asn/Gln) amidotransferase subunit B (Leptospira borgpetersenii serovar Hardjo-bovis (strain L550)).